Consider the following 434-residue polypeptide: Mothers against decapentaplegic homolog 9 (434 aa).

Residues 16–140 (PAVKRLLGWK…YRRVETPVLP (125 aa)) form the MH1 domain. Zn(2+)-binding residues include Cys68, Cys113, Cys125, and His130. The disordered stretch occupies residues 171 to 222 (MPHNATYPDSFQQSLGPAPPSSPGHVFPQSPCPTSYPQSPGSPSESDSPYQH). A compositionally biased stretch (polar residues) spans 202 to 221 (CPTSYPQSPGSPSESDSPYQ). In terms of domain architecture, MH2 spans 236 to 434 (WCSVAYYELN…SPHNPISSVS (199 aa)).

The protein belongs to the dwarfin/SMAD family. Interaction with the co-SMAD SMAD4. Interacts with PEBP2-alpha subunit. Interacts with RANBP3L. Post-translationally, phosphorylated on serine by BMP (bone morphogenetic proteins) type 1 receptor kinase. Phosphorylated by activin type I receptor-like kinase-2 (ALK-2).

The protein resides in the cytoplasm. It localises to the nucleus. Transcriptional modulator activated by BMP (bone morphogenetic proteins) type 1 receptor kinase. SMAD9 is a receptor-regulated SMAD (R-SMAD). Has been shown to be activated by activin type I receptor-like kinase-2 (ALK-2) which stimulates heteromerization between SMAD9 and SMAD4. ALK-2 binds TGF-beta, activin and BMP. The protein is Mothers against decapentaplegic homolog 9 (Smad9) of Rattus norvegicus (Rat).